Here is a 164-residue protein sequence, read N- to C-terminus: Respiratory growth induced protein 2 (164 aa).

It belongs to the RGI1 family.

It is found in the cytoplasm. Functionally, involved in the control of energetic metabolism and significantly contribute to cell fitness, especially under respiratory growth conditions. The protein is Respiratory growth induced protein 2 (RGI2) of Saccharomyces cerevisiae (strain RM11-1a) (Baker's yeast).